Consider the following 135-residue polypeptide: Large ribosomal subunit protein uL16 (135 aa).

The protein belongs to the universal ribosomal protein uL16 family. As to quaternary structure, part of the 50S ribosomal subunit.

Binds 23S rRNA and is also seen to make contacts with the A and possibly P site tRNAs. This chain is Large ribosomal subunit protein uL16, found in Coprothermobacter proteolyticus (strain ATCC 35245 / DSM 5265 / OCM 4 / BT).